The primary structure comprises 413 residues: uncharacterized protein (413 aa).

Belongs to the mimivirus L17x/L18x family.

This is an uncharacterized protein from Acanthamoeba polyphaga (Amoeba).